A 658-amino-acid polypeptide reads, in one-letter code: Translin-associated factor X-interacting protein 1 (658 aa).

Coiled coils occupy residues 144-184 (EISL…AEEY) and 230-295 (ALKM…LMQL).

Interacts with TSNAX.

The protein resides in the cytoplasm. It is found in the perinuclear region. In terms of biological role, possible role in spermatogenesis. The sequence is that of Translin-associated factor X-interacting protein 1 from Homo sapiens (Human).